The following is a 248-amino-acid chain: UPF0736 protein BCAH187_A1335 (248 aa).

The protein belongs to the UPF0736 family.

In Bacillus cereus (strain AH187), this protein is UPF0736 protein BCAH187_A1335.